The following is an 888-amino-acid chain: MNSVNNIRSTFLDYFHRNGHQVLSSSPLVPRNDPTLMFTNAGMVQFKNVFTGLEQHLYKKATTAQKCVRAGGKHNDLDNVGYTARHHTFFEMLGNFSFGDYFKEEAIFLSWDLLTKEFCLPKDKLLVTVYQSDDVAAELWRKISGLPDEKIVRIATADNFWAMGDTGPCGPCSEIFYDHGDEIWGGPPGSMEEDGDRFIEIWNLVFMQYEQLSKEERVDLPHPSIDTGMGLERIAAVLQGVHDNYDIDLFRVLIGASEKITGIKATGDFVASHRVIADHLRSSAFLIADGVLPSNEGRGYVLRRIMRRAMRHAHLLGAKEPLMWQLLPALICEMGQAYPELVRAESLISETLKLEEIRFRKTLERGLGLLNEESAKLKEGDHLNGEVAFKLYDTYGFPLDLTQDVLRRRGISVDVDAFDKAMERQKEEARAHWSGSGEAVTETIWFSVRDQVGVTEFLGYETEKAEGIITALVCDGKIVDEVSSGQKAILVLNQTPFYGESGGQIGDSGIISGEDFIFEVHDTQKKADGVFIHLGKVKSGHAKISDCVQLTVDVVRRKKIRANHSATHLLHEALRQVLGSHVTQKGSLVSPERLRFDFSHPKSVSLEELKKIEDLANEIVLQNNKVTTRLMAVDEAISEGAMALFGEKYEDEVRVVSMGAPLEQGGLKKHWSIELCGGTHVERTGDIGLIHIVSESSVSAGVRRIEALTGAAARLYLCRQDVRIREISDLLKTSSSDLEERVRSLLDERRKFEKELNDVRKKMVLNGKITESGQGDITIINGLSFMRHIVKNILPRDLKALVDAGKKQIGSGVVAFITISEDGKGSAVVGVTDDLTDKLNAVDLVRILSNVLGGQGGGGRSDMAQAGGPDGNKANEAFAALKDFLEKT.

Positions 564, 568, 676, and 680 each coordinate Zn(2+).

It belongs to the class-II aminoacyl-tRNA synthetase family. The cofactor is Zn(2+).

The protein localises to the cytoplasm. The enzyme catalyses tRNA(Ala) + L-alanine + ATP = L-alanyl-tRNA(Ala) + AMP + diphosphate. In terms of biological role, catalyzes the attachment of alanine to tRNA(Ala) in a two-step reaction: alanine is first activated by ATP to form Ala-AMP and then transferred to the acceptor end of tRNA(Ala). Also edits incorrectly charged Ser-tRNA(Ala) and Gly-tRNA(Ala) via its editing domain. This Bartonella tribocorum (strain CIP 105476 / IBS 506) protein is Alanine--tRNA ligase.